The chain runs to 456 residues: Imidazolonepropionase (456 aa).

2 residues coordinate Fe(3+): histidine 104 and histidine 106. Zn(2+) is bound by residues histidine 104 and histidine 106. Residues arginine 113, tyrosine 176, and histidine 209 each contribute to the 4-imidazolone-5-propanoate site. Residue tyrosine 176 participates in N-formimidoyl-L-glutamate binding. Histidine 274 is a Fe(3+) binding site. Histidine 274 is a Zn(2+) binding site. Residue glutamine 277 coordinates 4-imidazolone-5-propanoate. Residue aspartate 349 coordinates Fe(3+). Position 349 (aspartate 349) interacts with Zn(2+). N-formimidoyl-L-glutamate-binding residues include asparagine 351 and glycine 353. Residue serine 354 participates in 4-imidazolone-5-propanoate binding.

The protein belongs to the metallo-dependent hydrolases superfamily. HutI family. It depends on Zn(2+) as a cofactor. Fe(3+) is required as a cofactor.

The protein resides in the cytoplasm. The catalysed reaction is 4-imidazolone-5-propanoate + H2O = N-formimidoyl-L-glutamate. It participates in amino-acid degradation; L-histidine degradation into L-glutamate; N-formimidoyl-L-glutamate from L-histidine: step 3/3. Catalyzes the hydrolytic cleavage of the carbon-nitrogen bond in imidazolone-5-propanoate to yield N-formimidoyl-L-glutamate. It is the third step in the universal histidine degradation pathway. This chain is Imidazolonepropionase, found in Verminephrobacter eiseniae (strain EF01-2).